The sequence spans 232 residues: MKTLSDISESVLIPTNSSLDKLLGGGIEKGCITQFYGPPGSGKTNIALKILYEATKNGSKAIYMDTEGGLSLERIQQIAGTDFGSISKNIYILEPKSFDEQILDIQNIEDILKKDKSIDMLIIDSIVALYRVEDGDPSEINKRLGRLMAKLLRLSREYNVAIVITNQIYSPFDSDDLIIEPIGGTVLKYWSKIIIEIEKSVDSLKRTATLQRHKTKAPGQSIKFEIIDRGII.

Belongs to the eukaryotic RecA-like protein family. RadB subfamily.

In terms of biological role, involved in DNA repair and in homologous recombination. May regulate the cleavage reactions of the branch-structured DNA. Has a very weak ATPase activity that is not stimulated by DNA. Binds DNA but does not promote DNA strands exchange. The polypeptide is DNA repair and recombination protein RadB (Methanosphaera stadtmanae (strain ATCC 43021 / DSM 3091 / JCM 11832 / MCB-3)).